The primary structure comprises 80 residues: Large ribosomal subunit protein bL31B (80 aa).

Belongs to the bacterial ribosomal protein bL31 family. Type B subfamily. In terms of assembly, part of the 50S ribosomal subunit.

The sequence is that of Large ribosomal subunit protein bL31B from Xylella fastidiosa (strain 9a5c).